A 532-amino-acid chain; its full sequence is CTP synthase (532 aa).

The interval 1 to 267 (MTKYIFVTGG…DDIVLEHLQL (267 aa)) is amidoligase domain. Residue S13 coordinates CTP. S13 serves as a coordination point for UTP. 14–19 (SIGKGI) is a binding site for ATP. Y54 lines the L-glutamine pocket. D71 serves as a coordination point for ATP. Mg(2+) contacts are provided by D71 and E141. CTP is bound by residues 148 to 150 (DIE), 188 to 193 (KTKPTQ), and K224. Residues 188-193 (KTKPTQ) and K224 each bind UTP. One can recognise a Glutamine amidotransferase type-1 domain in the interval 292-532 (RIGLVGKYVS…DFVGAALNNK (241 aa)). G354 serves as a coordination point for L-glutamine. C381 acts as the Nucleophile; for glutamine hydrolysis in catalysis. Residues 382 to 385 (LGMQ), E405, and R462 contribute to the L-glutamine site. Residues H507 and E509 contribute to the active site.

This sequence belongs to the CTP synthase family. In terms of assembly, homotetramer.

The enzyme catalyses UTP + L-glutamine + ATP + H2O = CTP + L-glutamate + ADP + phosphate + 2 H(+). It catalyses the reaction L-glutamine + H2O = L-glutamate + NH4(+). It carries out the reaction UTP + NH4(+) + ATP = CTP + ADP + phosphate + 2 H(+). Its pathway is pyrimidine metabolism; CTP biosynthesis via de novo pathway; CTP from UDP: step 2/2. Allosterically activated by GTP, when glutamine is the substrate; GTP has no effect on the reaction when ammonia is the substrate. The allosteric effector GTP functions by stabilizing the protein conformation that binds the tetrahedral intermediate(s) formed during glutamine hydrolysis. Inhibited by the product CTP, via allosteric rather than competitive inhibition. Its function is as follows. Catalyzes the ATP-dependent amination of UTP to CTP with either L-glutamine or ammonia as the source of nitrogen. Regulates intracellular CTP levels through interactions with the four ribonucleotide triphosphates. This Listeria innocua serovar 6a (strain ATCC BAA-680 / CLIP 11262) protein is CTP synthase.